The primary structure comprises 381 residues: Queuine tRNA-ribosyltransferase (381 aa).

Aspartate 92 acts as the Proton acceptor in catalysis. Residues 92–96, aspartate 146, glutamine 190, and glycine 217 contribute to the substrate site; that span reads DSGGF. An RNA binding region spans residues 248-254; that stretch reads GVGRPED. Aspartate 267 (nucleophile) is an active-site residue. The interval 272–276 is RNA binding; important for wobble base 34 recognition; the sequence is TRNAR. Zn(2+)-binding residues include cysteine 305, cysteine 307, cysteine 310, and histidine 337.

Belongs to the queuine tRNA-ribosyltransferase family. Homodimer. Within each dimer, one monomer is responsible for RNA recognition and catalysis, while the other monomer binds to the replacement base PreQ1. Zn(2+) is required as a cofactor.

It catalyses the reaction 7-aminomethyl-7-carbaguanine + guanosine(34) in tRNA = 7-aminomethyl-7-carbaguanosine(34) in tRNA + guanine. The protein operates within tRNA modification; tRNA-queuosine biosynthesis. Catalyzes the base-exchange of a guanine (G) residue with the queuine precursor 7-aminomethyl-7-deazaguanine (PreQ1) at position 34 (anticodon wobble position) in tRNAs with GU(N) anticodons (tRNA-Asp, -Asn, -His and -Tyr). Catalysis occurs through a double-displacement mechanism. The nucleophile active site attacks the C1' of nucleotide 34 to detach the guanine base from the RNA, forming a covalent enzyme-RNA intermediate. The proton acceptor active site deprotonates the incoming PreQ1, allowing a nucleophilic attack on the C1' of the ribose to form the product. After dissociation, two additional enzymatic reactions on the tRNA convert PreQ1 to queuine (Q), resulting in the hypermodified nucleoside queuosine (7-(((4,5-cis-dihydroxy-2-cyclopenten-1-yl)amino)methyl)-7-deazaguanosine). The protein is Queuine tRNA-ribosyltransferase of Xanthomonas euvesicatoria pv. vesicatoria (strain 85-10) (Xanthomonas campestris pv. vesicatoria).